The chain runs to 1032 residues: Exo-beta-D-glucosaminidase (1032 aa).

An N-terminal signal peptide occupies residues 1–32 (MSFRQKRTRIPLLAMTVTALAAAVCGVTTAPA). Positions 33–46 (ATGAEVAVPLSVGA) are excised as a propeptide. Asp469 acts as the Proton donor in catalysis. The Nucleophile role is filled by Glu541. Residues 883-908 (SVRISGWNTGTQTVPADGSGPGPSDP) are disordered. The CBM6 domain occupies 909-1032 (VDYQAEDATI…GGPNVDKITL (124 aa)).

This sequence belongs to the glycosyl hydrolase 2 family. In terms of assembly, monomer.

Its subcellular location is the secreted. It catalyses the reaction Hydrolysis of chitosan or chitosan oligosaccharides to remove successive D-glucosamine residues from the non-reducing termini.. Hydrolyzes chitosan and chitooligosaccharides with retention of anomeric configuration. Has maximum activity on chitotetraose, chitopentaose and their corresponding alcohols, with a slight decrease in the rate of hydrolysis on longer chains. Has no activity against beta-D-glucopyranoside, beta-D-xylopyranoside, beta-D-mannoside, beta-D-glucuronide, beta-D-galactoside, beta-D-N-acetylgalactosamide, beta-D-N-acetylglucosaminide and alpha-D-N-acetylglucosaminide. In Amycolatopsis orientalis (Nocardia orientalis), this protein is Exo-beta-D-glucosaminidase.